The following is a 366-amino-acid chain: MSGNTIGKLFTVTTFGESHGPALGCIVDGCPPGLALSEADLQHDLYRRRPGQSRHTTQRRESDTVKILSGVFEGLTTGTPIGLLIENEDQRSKDYASIADRFRPGHADYTYHMKYGFRDYRGGGRSSARETAMRVAAGGIAKKYLRERLGVEIRGYLAQLGPIRIDPVDWNAIDDNPFFCPDPARVPELEAYMDALRKEGDSSGARVNVVARGVPPGLGEPVFDRLDAELAYALMSINAVKGVEIGAGFGCVEAKGSVFRDEMSPEGFLGNSAGGILGGISTGQDIVASIALKPTSSLRLPGRSVNIRGESVEVVTTGRHDPCVGIRATPIAEAMMAIVLMDHYLRHRGQNQDVVRTLDPIPPSAF.

2 residues coordinate NADP(+): R48 and R54. Residues 125 to 127, 238 to 239, G278, 293 to 297, and R319 contribute to the FMN site; these read RSS, NA, and KPTSS.

The protein belongs to the chorismate synthase family. Homotetramer. FMNH2 serves as cofactor.

It carries out the reaction 5-O-(1-carboxyvinyl)-3-phosphoshikimate = chorismate + phosphate. The protein operates within metabolic intermediate biosynthesis; chorismate biosynthesis; chorismate from D-erythrose 4-phosphate and phosphoenolpyruvate: step 7/7. Catalyzes the anti-1,4-elimination of the C-3 phosphate and the C-6 proR hydrogen from 5-enolpyruvylshikimate-3-phosphate (EPSP) to yield chorismate, which is the branch point compound that serves as the starting substrate for the three terminal pathways of aromatic amino acid biosynthesis. This reaction introduces a second double bond into the aromatic ring system. This is Chorismate synthase from Methylococcus capsulatus (strain ATCC 33009 / NCIMB 11132 / Bath).